The sequence spans 361 residues: Neuronal-specific septin-3 (361 aa).

The interval Met-1–Arg-46 is disordered. Residues Val-15–Pro-34 show a composition bias toward low complexity. Residues Gly-36–Arg-46 show a composition bias toward gly residues. One can recognise a Septin-type G domain in the interval Ala-70–Asp-342. Residues Gly-80–Ser-87 form a G1 motif region. GTP is bound by residues Gly-80 to Ser-87 and Thr-114. The segment at Asp-137–Gly-140 is G3 motif. Residues Ala-219–Asp-222 are G4 motif. Residues Lys-220–Glu-228, Gly-276, and Arg-291 each bind GTP. Positions Asn-341–Leu-361 are disordered. The span at Ile-349 to Leu-361 shows a compositional bias: polar residues.

It belongs to the TRAFAC class TrmE-Era-EngA-EngB-Septin-like GTPase superfamily. Septin GTPase family.

Its subcellular location is the cytoplasm. Functionally, may be involved in cytokinesis. The polypeptide is Neuronal-specific septin-3 (Danio rerio (Zebrafish)).